We begin with the raw amino-acid sequence, 241 residues long: Acetoacetyl-CoA reductase (241 aa).

NADP(+) is bound by residues 12–14, Arg-39, and 82–86; these read RGI and NAGIT. Residues Asp-88 and 141-144 each bind substrate; that span reads QMGQ. Tyr-147 functions as the Proton acceptor in the catalytic mechanism. 177-180 provides a ligand contact to NADP(+); it reads PGYI. 178–179 lines the substrate pocket; it reads GY.

Belongs to the short-chain dehydrogenases/reductases (SDR) family.

The protein localises to the cytoplasm. It catalyses the reaction a (3R)-3-hydroxyacyl-CoA + NADP(+) = a 3-oxoacyl-CoA + NADPH + H(+). It participates in biopolymer metabolism; poly-(R)-3-hydroxybutanoate biosynthesis. The polypeptide is Acetoacetyl-CoA reductase (Rhizobium meliloti (strain 1021) (Ensifer meliloti)).